We begin with the raw amino-acid sequence, 236 residues long: Alpha-S2-casein (236 aa).

The signal sequence occupies residues 1 to 15; sequence MKFFIFTCLLAVALA. A phosphoserine mark is found at Ser-23, Ser-24, Ser-25, Ser-28, Ser-47, Ser-80, Ser-81, Ser-82, Ser-85, Ser-157, and Ser-169. Positions 72–93 are disordered; the sequence is PTEVYSSSSSSEESAKFPTERE. Positions 84-93 are enriched in basic and acidic residues; the sequence is ESAKFPTERE.

Belongs to the alpha-casein family. There are at least three different forms found in milk, with varying degrees of phosphorylation. These include form 10-P which is phosphorylated at ten sites that have not been determined, form 11-P which is phosphorylated at eleven sites and form 12-P which is phosphorylated at twelve sites. In terms of tissue distribution, mammary gland specific. Secreted in milk.

Its subcellular location is the secreted. Important role in the capacity of milk to transport calcium phosphate. This is Alpha-S2-casein from Equus asinus (Donkey).